We begin with the raw amino-acid sequence, 122 residues long: Small ribosomal subunit protein uS12c (122 aa).

The protein belongs to the universal ribosomal protein uS12 family. As to quaternary structure, part of the 30S ribosomal subunit.

The protein resides in the plastid. It localises to the chloroplast. Its function is as follows. With S4 and S5 plays an important role in translational accuracy. Located at the interface of the 30S and 50S subunits. In Mesostigma viride (Green alga), this protein is Small ribosomal subunit protein uS12c (rps12).